The chain runs to 351 residues: Peptide chain release factor 1 (351 aa).

Gln-229 bears the N5-methylglutamine mark.

This sequence belongs to the prokaryotic/mitochondrial release factor family. Post-translationally, methylated by PrmC. Methylation increases the termination efficiency of RF1.

It is found in the cytoplasm. Functionally, peptide chain release factor 1 directs the termination of translation in response to the peptide chain termination codons UAG and UAA. The polypeptide is Peptide chain release factor 1 (Dinoroseobacter shibae (strain DSM 16493 / NCIMB 14021 / DFL 12)).